A 1215-amino-acid chain; its full sequence is Pesticidal crystal protein Cry1Ka (1215 aa).

It belongs to the delta endotoxin family.

Promotes colloidosmotic lysis by binding to the midgut epithelial cells of insects. Selectively toxic to Artogeia rapae but not active on Plutella xylostella. The sequence is that of Pesticidal crystal protein Cry1Ka (cry1Ka) from Bacillus thuringiensis subsp. morrisoni.